Consider the following 475-residue polypeptide: Pyruvate kinase (475 aa).

R33 contributes to the substrate binding site. Positions 35, 37, and 67 each coordinate K(+). 35-38 contributes to the ATP binding site; sequence NFSH. Residues R74 and K155 each coordinate ATP. A Mg(2+)-binding site is contributed by E220. Substrate is bound by residues G243, D244, and T276. D244 contacts Mg(2+).

The protein belongs to the pyruvate kinase family. As to quaternary structure, homotetramer. Requires Mg(2+) as cofactor. It depends on K(+) as a cofactor.

It carries out the reaction pyruvate + ATP = phosphoenolpyruvate + ADP + H(+). It functions in the pathway carbohydrate degradation; glycolysis; pyruvate from D-glyceraldehyde 3-phosphate: step 5/5. This chain is Pyruvate kinase (pyk), found in Corynebacterium glutamicum (strain ATCC 13032 / DSM 20300 / JCM 1318 / BCRC 11384 / CCUG 27702 / LMG 3730 / NBRC 12168 / NCIMB 10025 / NRRL B-2784 / 534).